The chain runs to 863 residues: Leucine--tRNA ligase (863 aa).

The short motif at 42 to 52 is the 'HIGH' region element; sequence PYPSGKIHMGH. A 'KMSKS' region motif is present at residues 618 to 622; sequence KMSKS. Residue K621 participates in ATP binding.

The protein belongs to the class-I aminoacyl-tRNA synthetase family.

The protein localises to the cytoplasm. It catalyses the reaction tRNA(Leu) + L-leucine + ATP = L-leucyl-tRNA(Leu) + AMP + diphosphate. In Desulfatibacillum aliphaticivorans, this protein is Leucine--tRNA ligase.